Reading from the N-terminus, the 174-residue chain is 16S rRNA aminocarboxypropyltransferase (174 aa).

S-adenosyl-L-methionine contacts are provided by threonine 26, leucine 73, leucine 97, and serine 116.

The protein belongs to the TDD superfamily. TSR3 family.

It localises to the cytoplasm. It carries out the reaction an N(1)-methylpseudouridine in rRNA + S-adenosyl-L-methionine = N(1)-methyl-N(3)-[(3S)-3-amino-3-carboxypropyl]pseudouridine in rRNA + S-methyl-5'-thioadenosine + H(+). Functionally, aminocarboxypropyltransferase that catalyzes the aminocarboxypropyl transfer on pseudouridine corresponding to position 914 in M.jannaschii 16S rRNA. It constitutes the last step in biosynthesis of the hypermodified N1-methyl-N3-(3-amino-3-carboxypropyl) pseudouridine (m1acp3-Psi). The polypeptide is 16S rRNA aminocarboxypropyltransferase (Methanosarcina acetivorans (strain ATCC 35395 / DSM 2834 / JCM 12185 / C2A)).